The following is a 312-amino-acid chain: DNA-directed RNA polymerase subunit alpha (312 aa).

Residues 1–226 are alpha N-terminal domain (alpha-NTD); that stretch reads MIEFEKPIIT…EHLNLFTDLT (226 aa). The interval 242–312 is alpha C-terminal domain (alpha-CTD); the sequence is NDEKLLDRTI…DLGLGLKNDK (71 aa).

Belongs to the RNA polymerase alpha chain family. As to quaternary structure, homodimer. The RNAP catalytic core consists of 2 alpha, 1 beta, 1 beta' and 1 omega subunit. When a sigma factor is associated with the core the holoenzyme is formed, which can initiate transcription.

It carries out the reaction RNA(n) + a ribonucleoside 5'-triphosphate = RNA(n+1) + diphosphate. Functionally, DNA-dependent RNA polymerase catalyzes the transcription of DNA into RNA using the four ribonucleoside triphosphates as substrates. This is DNA-directed RNA polymerase subunit alpha from Streptococcus thermophilus (strain CNRZ 1066).